Consider the following 122-residue polypeptide: Glycine cleavage system H protein (122 aa).

One can recognise a Lipoyl-binding domain in the interval 19–101 (VATVGITDYA…QGKAWFFKIK (83 aa)). An N6-lipoyllysine modification is found at lysine 60.

Belongs to the GcvH family. The glycine cleavage system is composed of four proteins: P, T, L and H. It depends on (R)-lipoate as a cofactor.

The glycine cleavage system catalyzes the degradation of glycine. The H protein shuttles the methylamine group of glycine from the P protein to the T protein. The polypeptide is Glycine cleavage system H protein (Bradyrhizobium diazoefficiens (strain JCM 10833 / BCRC 13528 / IAM 13628 / NBRC 14792 / USDA 110)).